We begin with the raw amino-acid sequence, 151 residues long: Deoxyuridine 5'-triphosphate nucleotidohydrolase (151 aa).

Substrate is bound by residues 70–72 (RSG), Asn83, 87–89 (LID), and Met97.

It belongs to the dUTPase family. As to quaternary structure, homotrimer. It depends on Mg(2+) as a cofactor.

The enzyme catalyses dUTP + H2O = dUMP + diphosphate + H(+). The protein operates within pyrimidine metabolism; dUMP biosynthesis; dUMP from dCTP (dUTP route): step 2/2. This enzyme is involved in nucleotide metabolism: it produces dUMP, the immediate precursor of thymidine nucleotides and it decreases the intracellular concentration of dUTP so that uracil cannot be incorporated into DNA. The polypeptide is Deoxyuridine 5'-triphosphate nucleotidohydrolase (Escherichia coli O45:K1 (strain S88 / ExPEC)).